Consider the following 33-residue polypeptide: Mu/omega-theraphotoxin-Tap2a (33 aa).

3 disulfides stabilise this stretch: cysteine 2–cysteine 17, cysteine 9–cysteine 22, and cysteine 16–cysteine 29.

The protein belongs to the neurotoxin 10 (Hwtx-1) family. 59 (Tltx) subfamily. Expressed by the venom gland.

Its subcellular location is the secreted. Its function is as follows. Gating-modifier toxin that inhibits both sodium (Nav) and calcium (Cav3) channels by inducing hyperpolarizing shift in voltage-dependence of activation and steady state inactivation. Inhibits Nav1.1/SCN1A, Nav1.2/SCN2A, Nav1.6/SCN6A, Nav1.7/SCN9A and Cav3.1/CACNA1G sodium and calcium channels at nanomolar concentrations (IC(50)=169-621 nM). Surprisingly, selectively slows fast inactivation of Nav1.3/SCN3A. Also shows moderate inhibition of Nav1.3/SCN3A sodium channels (IC(50)=1216 nM). The polypeptide is Mu/omega-theraphotoxin-Tap2a (Theraphosa apophysis (Goliath pinkfoot tarantula)).